Here is a 966-residue protein sequence, read N- to C-terminus: Translation initiation factor IF-2 (966 aa).

Composition is skewed to basic and acidic residues over residues 99–113, 123–183, 197–212, 220–249, and 266–277; these read KRDE…EAAD, EQAR…KAEE, DASR…RVAV, AADD…EAEA, and PSERKAEEKKAE. Positions 99–382 are disordered; sequence KRDEAGADQH…NFQAPTEPVV (284 aa). Over residues 304–315 the composition is skewed to low complexity; that stretch reads AATTTTTTATTT. Residues 346–359 are compositionally biased toward gly residues; sequence SSGGVGGWRGGPRG. One can recognise a tr-type G domain in the interval 466 to 635; sequence PRPPVVTVMG…LLQAEVLELK (170 aa). The G1 stretch occupies residues 475–482; it reads GHVDHGKT. A GTP-binding site is contributed by 475–482; it reads GHVDHGKT. Residues 500–504 are G2; sequence GITQH. The G3 stretch occupies residues 521-524; that stretch reads DTPG. GTP is bound by residues 521 to 525 and 575 to 578; these read DTPGH and NKID. The interval 575–578 is G4; the sequence is NKID. The segment at 611 to 613 is G5; it reads SAK.

Belongs to the TRAFAC class translation factor GTPase superfamily. Classic translation factor GTPase family. IF-2 subfamily.

Its subcellular location is the cytoplasm. In terms of biological role, one of the essential components for the initiation of protein synthesis. Protects formylmethionyl-tRNA from spontaneous hydrolysis and promotes its binding to the 30S ribosomal subunits. Also involved in the hydrolysis of GTP during the formation of the 70S ribosomal complex. The sequence is that of Translation initiation factor IF-2 from Cupriavidus pinatubonensis (strain JMP 134 / LMG 1197) (Cupriavidus necator (strain JMP 134)).